A 181-amino-acid polypeptide reads, in one-letter code: Large ribosomal subunit protein uL5 (181 aa).

The protein belongs to the universal ribosomal protein uL5 family. In terms of assembly, part of the 50S ribosomal subunit; part of the 5S rRNA/L5/L18/L25 subcomplex. Contacts the 5S rRNA and the P site tRNA. Forms a bridge to the 30S subunit in the 70S ribosome.

Functionally, this is one of the proteins that bind and probably mediate the attachment of the 5S RNA into the large ribosomal subunit, where it forms part of the central protuberance. In the 70S ribosome it contacts protein S13 of the 30S subunit (bridge B1b), connecting the 2 subunits; this bridge is implicated in subunit movement. Contacts the P site tRNA; the 5S rRNA and some of its associated proteins might help stabilize positioning of ribosome-bound tRNAs. The polypeptide is Large ribosomal subunit protein uL5 (Helicobacter pylori (strain Shi470)).